The sequence spans 1151 residues: Phospholipid-transporting ATPase NEO1 (1151 aa).

Disordered stretches follow at residues 1-21 and 73-95; these read MPNP…NNNQ and LDNF…THPL. The Extracellular portion of the chain corresponds to 1-184; it reads MPNPPSFKSH…LSNAKYNAVT (184 aa). Over residues 12-21 the composition is skewed to polar residues; the sequence is QNLFNSNNNQ. Residues 51–104 form a required for endosome-to-Golgi sorting region; that stretch reads EPLSKHNTVGDRESFEMRTVDDLDNFSNHSSDSHRKSSNTDTHPLMYDNRLSQD. The residue at position 102 (serine 102) is a Phosphoserine. A helical membrane pass occupies residues 185–205; that stretch reads FVPTLLYEQFKFFYNLYFLVV. The Cytoplasmic portion of the chain corresponds to 206–209; sequence ALSQ. The chain crosses the membrane as a helical span at residues 210–230; the sequence is AVPALRIGYLSSYIVPLAFVL. The Extracellular portion of the chain corresponds to 231–367; the sequence is TVTMAKEAID…TSNPLSVDNT (137 aa). A helical transmembrane segment spans residues 368–388; that stretch reads LWANTVLASSGFCIACVVYTG. Over 389–416 the chain is Cytoplasmic; sequence RDTRQAMNTTTAKVKTGLLELEINSISK. The chain crosses the membrane as a helical span at residues 417-437; the sequence is ILCACVFALSILLVAFAGFHN. A topological domain (extracellular) is located at residue aspartate 438. Residues 439–459 traverse the membrane as a helical segment; sequence DWYIDILRYLILFSTIIPVSL. Over 460–947 the chain is Cytoplasmic; the sequence is RVNLDLAKSV…KLAQFVMHRG (488 aa). The 4-aspartylphosphate intermediate role is filled by aspartate 503. The ATP site is built by aspartate 503, lysine 504, and threonine 505. Mg(2+) is bound at residue aspartate 503. Residue threonine 505 coordinates Mg(2+). A Phosphoserine modification is found at serine 551. Residues glutamate 597, phenylalanine 640, serine 642, lysine 645, lysine 664, arginine 693, threonine 694, threonine 774, glycine 775, aspartate 776, arginine 856, and lysine 862 each coordinate ATP. Aspartate 882 contacts Mg(2+). ATP contacts are provided by asparagine 885 and aspartate 886. Residue aspartate 886 participates in Mg(2+) binding. Residues 948–968 traverse the membrane as a helical segment; it reads LIIAICQAVYSICSLFEPIAL. At 969-970 the chain is on the extracellular side; it reads YQ. The chain crosses the membrane as a helical span at residues 971–991; it reads GWLMVGYATCYTMAPVFSLTL. At 992 to 1020 the chain is on the cytoplasmic side; sequence DHDIEESLTKIYPELYKELTEGKSLSYKT. The helical transmembrane segment at 1021-1041 threads the bilayer; that stretch reads FFVWVLLSLFQGSVIQLFSQA. Topologically, residues 1042-1052 are extracellular; the sequence is FTSLLDTDFTR. A helical membrane pass occupies residues 1053 to 1073; sequence MVAISFTALVVNELIMVALEI. Topologically, residues 1074–1078 are cytoplasmic; that stretch reads YTWNK. The helical transmembrane segment at 1079 to 1099 threads the bilayer; the sequence is TMLVTEIATLLFYIVSVPFLG. Residues 1100-1109 are Extracellular-facing; the sequence is DYFDLGYMTT. Residues 1110 to 1130 traverse the membrane as a helical segment; the sequence is VNYYAGLLVILLISIFPVWTA. Over 1131–1151 the chain is Cytoplasmic; that stretch reads KAIYRRLHPPSYAKVQEFATP. The tract at residues 1131-1151 is required for endosomal targeting; it reads KAIYRRLHPPSYAKVQEFATP.

It belongs to the cation transport ATPase (P-type) (TC 3.A.3) family. Type IV subfamily. As to quaternary structure, interacts with MON2. Interacts with ANY1. Functions without a CDC50/LEM3 family accessory subunit. Requires Mg(2+) as cofactor.

Its subcellular location is the endosome membrane. It is found in the golgi apparatus membrane. The catalysed reaction is ATP + H2O + phospholipidSide 1 = ADP + phosphate + phospholipidSide 2.. It carries out the reaction a 1,2-diacyl-sn-glycero-3-phospho-L-serine(out) + ATP + H2O = a 1,2-diacyl-sn-glycero-3-phospho-L-serine(in) + ADP + phosphate + H(+). The enzyme catalyses a 1,2-diacyl-sn-glycero-3-phosphoethanolamine(out) + ATP + H2O = a 1,2-diacyl-sn-glycero-3-phosphoethanolamine(in) + ADP + phosphate + H(+). Flippase that catalyzes the hydrolysis of ATP coupled to the transport of lysophosphatidylserine, phosphatidylethanolamine, and phosphatidylserine from the lumenal to the cytosolic leaflet of the Golgi apparatus membrane and ensures the maintenance of asymmetric distribution of phospholipids. Does not appear to transport phosphatidylcholine or sphingomyelin. May be involved in recycling from endosomes by driving the formation of SNX3-dependent recycling tubules. Required for COPI retrograde transport from the Golgi to the endoplasmic reticulum, Golgi-endosome trafficking, and Golgi-dependent protein glycosylation. The sequence is that of Phospholipid-transporting ATPase NEO1 from Saccharomyces cerevisiae (strain ATCC 204508 / S288c) (Baker's yeast).